Consider the following 228-residue polypeptide: Ankyrin repeat domain-containing protein 46 (228 aa).

ANK repeat units lie at residues 11-40 (QTNV…DPNI), 44-73 (RGRT…DLLA), 77-103 (QGNT…KIDI), and 107-138 (QGAT…EVKG). The chain crosses the membrane as a helical span at residues 195–215 (VLLLIFVIALLSLGIAYYVSG).

The protein localises to the membrane. This is Ankyrin repeat domain-containing protein 46 (ANKRD46) from Bos taurus (Bovine).